A 170-amino-acid polypeptide reads, in one-letter code: ATP synthase subunit b (170 aa).

The chain crosses the membrane as a helical span at residues 20–42 (QLLAMLVLLALLKKFALGPLLNI).

It belongs to the ATPase B chain family. As to quaternary structure, F-type ATPases have 2 components, F(1) - the catalytic core - and F(0) - the membrane proton channel. F(1) has five subunits: alpha(3), beta(3), gamma(1), delta(1), epsilon(1). F(0) has three main subunits: a(1), b(2) and c(10-14). The alpha and beta chains form an alternating ring which encloses part of the gamma chain. F(1) is attached to F(0) by a central stalk formed by the gamma and epsilon chains, while a peripheral stalk is formed by the delta and b chains.

It localises to the cell membrane. In terms of biological role, f(1)F(0) ATP synthase produces ATP from ADP in the presence of a proton or sodium gradient. F-type ATPases consist of two structural domains, F(1) containing the extramembraneous catalytic core and F(0) containing the membrane proton channel, linked together by a central stalk and a peripheral stalk. During catalysis, ATP synthesis in the catalytic domain of F(1) is coupled via a rotary mechanism of the central stalk subunits to proton translocation. Its function is as follows. Component of the F(0) channel, it forms part of the peripheral stalk, linking F(1) to F(0). The protein is ATP synthase subunit b of Bacillus velezensis (strain DSM 23117 / BGSC 10A6 / LMG 26770 / FZB42) (Bacillus amyloliquefaciens subsp. plantarum).